An 821-amino-acid polypeptide reads, in one-letter code: DNA replication licensing factor MCM6 (821 aa).

Met-1 carries the post-translational modification N-acetylmethionine. Phosphoserine is present on residues Ser-13, Ser-219, and Ser-271. Residue Thr-278 is modified to Phosphothreonine. The MCM domain maps to 346–553 (LYHNLCTSLF…TDYAIARRIV (208 aa)). Residues His-359, Ser-399, Thr-400, Ala-401, Lys-402, Ser-403, and Asn-504 each contribute to the ATP site. The short motif at 528-531 (SRFD) is the Arginine finger element. ADP contacts are provided by Arg-619 and Glu-622. An N6-acetyllysine modification is found at Lys-643. The tract at residues 676–706 (VDEGPDGINGHADSPAPASGINGHSEDMNQD) is disordered. A phosphoserine mark is found at Ser-689 and Ser-762. Thr-791 is subject to Phosphothreonine.

The protein belongs to the MCM family. Component of the MCM2-7 complex. The complex forms a toroidal hexameric ring with the proposed subunit order MCM2-MCM6-MCM4-MCM7-MCM3-MCM5. Component of the CMG helicase complex, a hexameric ring of related MCM2-7 subunits stabilized by CDC45 and the tetrameric GINS complex. May interact with MCM10. Interacts with TIPIN. Interacts with CDT1. Interacts with MCMBP. Interacts with DDI2. In terms of processing, O-glycosylated (O-GlcNAcylated), in a cell cycle-dependent manner.

It is found in the nucleus. The protein localises to the chromosome. It carries out the reaction ATP + H2O = ADP + phosphate + H(+). Acts as a component of the MCM2-7 complex (MCM complex) which is the replicative helicase essential for 'once per cell cycle' DNA replication initiation and elongation in eukaryotic cells. Core component of CDC45-MCM-GINS (CMG) helicase, the molecular machine that unwinds template DNA during replication, and around which the replisome is built. The active ATPase sites in the MCM2-7 ring are formed through the interaction surfaces of two neighboring subunits such that a critical structure of a conserved arginine finger motif is provided in trans relative to the ATP-binding site of the Walker A box of the adjacent subunit. The six ATPase active sites, however, are likely to contribute differentially to the complex helicase activity. The chain is DNA replication licensing factor MCM6 (MCM6) from Bos taurus (Bovine).